Here is a 559-residue protein sequence, read N- to C-terminus: Urocanate hydratase (559 aa).

Residues 50–51, Q128, 174–176, D194, R199, 240–241, 261–265, 271–272, and Y320 contribute to the NAD(+) site; these read GG, GMG, NA, QTSAH, and YI. The active site involves C408. Position 490 (G490) interacts with NAD(+).

The protein belongs to the urocanase family. Requires NAD(+) as cofactor.

The protein localises to the cytoplasm. The catalysed reaction is 4-imidazolone-5-propanoate = trans-urocanate + H2O. It functions in the pathway amino-acid degradation; L-histidine degradation into L-glutamate; N-formimidoyl-L-glutamate from L-histidine: step 2/3. Its function is as follows. Catalyzes the conversion of urocanate to 4-imidazolone-5-propionate. The chain is Urocanate hydratase from Halalkalibacterium halodurans (strain ATCC BAA-125 / DSM 18197 / FERM 7344 / JCM 9153 / C-125) (Bacillus halodurans).